Here is a 533-residue protein sequence, read N- to C-terminus: Tryptophan 7-halogenase KtzQ (533 aa).

Residues glycine 14, threonine 16, alanine 17, alanine 40, glutamate 50, and alanine 51 each coordinate FAD. The active site involves lysine 80. An L-tryptophan-binding site is contributed by glutamate 359. Residues threonine 361 and glycine 362 each contribute to the chloride site. Leucine 363 contributes to the FAD binding site. L-tryptophan contacts are provided by tyrosine 456, tyrosine 457, glutamate 463, and phenylalanine 467.

The protein belongs to the flavin-dependent halogenase family. Bacterial tryptophan halogenase subfamily.

The catalysed reaction is L-tryptophan + FADH2 + chloride + O2 = 7-chloro-L-tryptophan + FAD + 2 H2O. In terms of biological role, involved in the biosynthesis of kutznerides, actinomycete-derived antifungal and antimicrobial cyclic hexadepsipeptides. Together with KtzR, catalyzes the regiospecific dichlorination of L-tryptophan (L-Trp) to produce 6,7-dichloro-L-tryptophan. KtzQ catalyzes the chlorination of L-Trp at C7 position to yield 7-chlorotryptophan. Can also use 6-chloro-L-tryptophan as substrate and form 6,7-dichloro-L-tryptophan, but has a preference for halogenation at the 7 position of unmodified L-Trp. Cannot use piperazic acid or gamma,delta-dehydropiperazic acid. This is Tryptophan 7-halogenase KtzQ from Kutzneria sp. (strain 744).